The sequence spans 105 residues: UPF0145 protein lpp0255 (105 aa).

Belongs to the UPF0145 family.

This Legionella pneumophila (strain Paris) protein is UPF0145 protein lpp0255.